A 138-amino-acid polypeptide reads, in one-letter code: Fluoride-specific ion channel FluC (138 aa).

Helical transmembrane passes span 34-54 (FMPKLWEGLSVGAGAAVGACA), 60-80 (MQFGEGLWPILAINMLGSFLM), 88-108 (FWGTGVLGGFTTFSAFAVVLV), and 112-132 (LPHAVAYLTVTVVSCVAAWLM). Na(+)-binding residues include Gly95 and Thr98.

It belongs to the fluoride channel Fluc/FEX (TC 1.A.43) family.

The protein resides in the cell membrane. It carries out the reaction fluoride(in) = fluoride(out). Na(+) is not transported, but it plays an essential structural role and its presence is essential for fluoride channel function. In terms of biological role, fluoride-specific ion channel. Important for reducing fluoride concentration in the cell, thus reducing its toxicity. The polypeptide is Fluoride-specific ion channel FluC (Corynebacterium efficiens (strain DSM 44549 / YS-314 / AJ 12310 / JCM 11189 / NBRC 100395)).